The primary structure comprises 176 residues: Large ribosomal subunit protein uL6 (176 aa).

Belongs to the universal ribosomal protein uL6 family. As to quaternary structure, part of the 50S ribosomal subunit.

This protein binds to the 23S rRNA, and is important in its secondary structure. It is located near the subunit interface in the base of the L7/L12 stalk, and near the tRNA binding site of the peptidyltransferase center. This chain is Large ribosomal subunit protein uL6, found in Burkholderia vietnamiensis (strain G4 / LMG 22486) (Burkholderia cepacia (strain R1808)).